The chain runs to 416 residues: Histidinol dehydrogenase (416 aa).

NAD(+) contacts are provided by Tyr-117, Gln-178, and Asn-201. Thr-224, Gln-246, and His-249 together coordinate substrate. Residues Gln-246 and His-249 each contribute to the Zn(2+) site. Active-site proton acceptor residues include Glu-314 and His-315. The substrate site is built by His-315, Asp-348, Glu-402, and His-407. A Zn(2+)-binding site is contributed by Asp-348. His-407 contributes to the Zn(2+) binding site.

It belongs to the histidinol dehydrogenase family. It depends on Zn(2+) as a cofactor.

The enzyme catalyses L-histidinol + 2 NAD(+) + H2O = L-histidine + 2 NADH + 3 H(+). Its pathway is amino-acid biosynthesis; L-histidine biosynthesis; L-histidine from 5-phospho-alpha-D-ribose 1-diphosphate: step 9/9. Functionally, catalyzes the sequential NAD-dependent oxidations of L-histidinol to L-histidinaldehyde and then to L-histidine. This is Histidinol dehydrogenase from Staphylococcus aureus (strain bovine RF122 / ET3-1).